Reading from the N-terminus, the 257-residue chain is NAD-capped RNA hydrolase NudC (257 aa).

Substrate is bound by residues lysine 25 and arginine 69. 2 residues coordinate Zn(2+): cysteine 98 and cysteine 101. Substrate is bound at residue glutamate 111. Positions 116 and 119 each coordinate Zn(2+). A substrate-binding site is contributed by tyrosine 124. Positions 125–248 (PQIAPCIIVA…TVARRLIEDT (124 aa)) constitute a Nudix hydrolase domain. Residues alanine 158, glutamate 174, and glutamate 178 each coordinate a divalent metal cation. Positions 159 to 180 (GFVEVGETLEQAVAREVMEESG) match the Nudix box motif. A substrate-binding site is contributed by 192 to 199 (QPWPFPQS). Position 219 (glutamate 219) interacts with a divalent metal cation. A substrate-binding site is contributed by alanine 241.

This sequence belongs to the Nudix hydrolase family. NudC subfamily. As to quaternary structure, homodimer. It depends on Mg(2+) as a cofactor. Mn(2+) serves as cofactor. Requires Zn(2+) as cofactor.

The catalysed reaction is a 5'-end NAD(+)-phospho-ribonucleoside in mRNA + H2O = a 5'-end phospho-adenosine-phospho-ribonucleoside in mRNA + beta-nicotinamide D-ribonucleotide + 2 H(+). The enzyme catalyses NAD(+) + H2O = beta-nicotinamide D-ribonucleotide + AMP + 2 H(+). It catalyses the reaction NADH + H2O = reduced beta-nicotinamide D-ribonucleotide + AMP + 2 H(+). In terms of biological role, mRNA decapping enzyme that specifically removes the nicotinamide adenine dinucleotide (NAD) cap from a subset of mRNAs by hydrolyzing the diphosphate linkage to produce nicotinamide mononucleotide (NMN) and 5' monophosphate mRNA. The NAD-cap is present at the 5'-end of some mRNAs and stabilizes RNA against 5'-processing. Has preference for mRNAs with a 5'-end purine. Catalyzes the hydrolysis of a broad range of dinucleotide pyrophosphates. The protein is NAD-capped RNA hydrolase NudC of Shigella flexneri.